The primary structure comprises 123 residues: Small ribosomal subunit protein uS12cz/uS12cy (123 aa).

Belongs to the universal ribosomal protein uS12 family. As to quaternary structure, part of the 30S ribosomal subunit.

It localises to the plastid. The protein localises to the chloroplast. With S4 and S5 plays an important role in translational accuracy. Located at the interface of the 30S and 50S subunits. This chain is Small ribosomal subunit protein uS12cz/uS12cy (rps12-A), found in Atropa belladonna (Belladonna).